The chain runs to 85 residues: uncharacterized protein (85 aa).

Disordered stretches follow at residues 1-22 and 41-85; these read MFAPPSSLFVPATAPAPSTSGF and EKER…SFLR. Polar residues predominate over residues 75–85; it reads FPSNYRGSFLR.

This is an uncharacterized protein from Dryophytes versicolor (chameleon treefrog).